A 120-amino-acid chain; its full sequence is Large ribosomal subunit protein bL20 (120 aa).

The protein belongs to the bacterial ribosomal protein bL20 family.

Functionally, binds directly to 23S ribosomal RNA and is necessary for the in vitro assembly process of the 50S ribosomal subunit. It is not involved in the protein synthesizing functions of that subunit. In Ureaplasma parvum serovar 3 (strain ATCC 27815 / 27 / NCTC 11736), this protein is Large ribosomal subunit protein bL20.